The primary structure comprises 308 residues: Acetaldehyde dehydrogenase 2 (308 aa).

Residue 12 to 15 (SGNI) coordinates NAD(+). Cysteine 127 serves as the catalytic Acyl-thioester intermediate. NAD(+) is bound by residues 162–170 (SAGPGTRAN) and asparagine 281.

The protein belongs to the acetaldehyde dehydrogenase family.

The enzyme catalyses acetaldehyde + NAD(+) + CoA = acetyl-CoA + NADH + H(+). This Mycobacterium marinum (strain ATCC BAA-535 / M) protein is Acetaldehyde dehydrogenase 2.